The following is a 272-amino-acid chain: Dermonecrotic toxin SpeSicTox-betaIB2a (272 aa).

Histidine 5 is a catalytic residue. Positions 25 and 27 each coordinate Mg(2+). Histidine 41 serves as the catalytic Nucleophile. Disulfide bonds link cysteine 45/cysteine 51 and cysteine 47/cysteine 191. Aspartate 85 contributes to the Mg(2+) binding site.

Belongs to the arthropod phospholipase D family. Class II subfamily. Mg(2+) is required as a cofactor. Expressed by the venom gland.

Its subcellular location is the secreted. The catalysed reaction is an N-(acyl)-sphingosylphosphocholine = an N-(acyl)-sphingosyl-1,3-cyclic phosphate + choline. It catalyses the reaction an N-(acyl)-sphingosylphosphoethanolamine = an N-(acyl)-sphingosyl-1,3-cyclic phosphate + ethanolamine. The enzyme catalyses a 1-acyl-sn-glycero-3-phosphocholine = a 1-acyl-sn-glycero-2,3-cyclic phosphate + choline. It carries out the reaction a 1-acyl-sn-glycero-3-phosphoethanolamine = a 1-acyl-sn-glycero-2,3-cyclic phosphate + ethanolamine. Its function is as follows. Dermonecrotic toxins cleave the phosphodiester linkage between the phosphate and headgroup of certain phospholipids (sphingolipid and lysolipid substrates), forming an alcohol (often choline) and a cyclic phosphate. This toxin acts on sphingomyelin (SM). It may also act on ceramide phosphoethanolamine (CPE), lysophosphatidylcholine (LPC) and lysophosphatidylethanolamine (LPE), but not on lysophosphatidylserine (LPS), and lysophosphatidylglycerol (LPG). It acts by transphosphatidylation, releasing exclusively cyclic phosphate products as second products. Induces dermonecrosis, hemolysis, increased vascular permeability, edema, inflammatory response, and platelet aggregation. This Sicarius peruensis (Six-eyed sand spider) protein is Dermonecrotic toxin SpeSicTox-betaIB2a.